Reading from the N-terminus, the 204-residue chain is High frequency lysogenization protein HflD homolog (204 aa).

The protein belongs to the HflD family.

The protein resides in the cytoplasm. It localises to the cell inner membrane. The chain is High frequency lysogenization protein HflD homolog from Shewanella woodyi (strain ATCC 51908 / MS32).